Here is a 197-residue protein sequence, read N- to C-terminus: Beta-crystallin A2 (197 aa).

The segment at Met1–Pro11 is N-terminal arm. 2 Beta/gamma crystallin 'Greek key' domains span residues Val12–Asn52 and Gly53–Leu99. The interval Cys100–Asp105 is connecting peptide. 2 consecutive Beta/gamma crystallin 'Greek key' domains span residues Ser106–Ser147 and Gly148–Gln196.

The protein belongs to the beta/gamma-crystallin family. Homo/heterodimer, or complexes of higher-order. The structure of beta-crystallin oligomers seems to be stabilized through interactions between the N-terminal arms.

Its function is as follows. Crystallins are the dominant structural components of the vertebrate eye lens. The chain is Beta-crystallin A2 (Cryba2) from Mus musculus (Mouse).